Reading from the N-terminus, the 123-residue chain is MRTQSLLLLGALLAVGSQLPAVFGRKKGEKSGGCPPDDGPCLLSVPDQCVEDSQCPLTRKCCYRACFRQCVPRVSVKLGSCPEDQLHCLSPMNHLCHKDSDCSGKKRCCHSACGRDCRDPARG.

Positions M1–G24 are cleaved as a signal peptide. WAP domains lie at K27–V74 and S75–A121. Intrachain disulfides connect C34–C62, C41–C66, C49–C61, C55–C70, C81–C109, C88–C113, C96–C108, and C102–C117.

It is found in the secreted. Functionally, putative acid-stable proteinase inhibitor. The polypeptide is WAP four-disulfide core domain protein 5 (WFDC5) (Gorilla gorilla gorilla (Western lowland gorilla)).